A 360-amino-acid chain; its full sequence is uncharacterized protein (360 aa).

The disordered stretch occupies residues methionine 1–arginine 33.

It belongs to the herpesviridae US22 family.

This is an uncharacterized protein from Human cytomegalovirus (strain AD169) (HHV-5).